The sequence spans 154 residues: Large-conductance mechanosensitive channel (154 aa).

2 helical membrane-spanning segments follow: residues 14 to 34 (VVDLAVGIVIGAAFGAIVNSL) and 86 to 106 (VFINALINFLILAMAIFFFVV).

This sequence belongs to the MscL family. As to quaternary structure, homopentamer.

It is found in the cell membrane. Its function is as follows. Channel that opens in response to stretch forces in the membrane lipid bilayer. May participate in the regulation of osmotic pressure changes within the cell. The protein is Large-conductance mechanosensitive channel of Dehalococcoides mccartyi (strain ATCC BAA-2100 / JCM 16839 / KCTC 5957 / BAV1).